The primary structure comprises 173 residues: Peptide deformylase (173 aa).

Cys91 and His133 together coordinate Fe cation. Glu134 is a catalytic residue. Residue His137 coordinates Fe cation.

This sequence belongs to the polypeptide deformylase family. Fe(2+) serves as cofactor.

The catalysed reaction is N-terminal N-formyl-L-methionyl-[peptide] + H2O = N-terminal L-methionyl-[peptide] + formate. Functionally, removes the formyl group from the N-terminal Met of newly synthesized proteins. Requires at least a dipeptide for an efficient rate of reaction. N-terminal L-methionine is a prerequisite for activity but the enzyme has broad specificity at other positions. This is Peptide deformylase from Blochmanniella pennsylvanica (strain BPEN).